The primary structure comprises 291 residues: Protein pxr1 (291 aa).

Residues Met-1–Lys-11 show a composition bias toward basic residues. Disordered stretches follow at residues Met-1–Asp-26 and Leu-146–Arg-268. Composition is skewed to polar residues over residues Asp-15–Thr-25 and Leu-146–Ala-156. One can recognise a G-patch domain in the interval Thr-25–Lys-79. Basic and acidic residues predominate over residues Glu-194–Arg-205. A compositionally biased stretch (basic residues) spans Lys-206–Lys-219. The segment covering Met-230–Glu-247 has biased composition (basic and acidic residues).

The protein belongs to the PINX1 family.

The protein localises to the nucleus. It localises to the nucleolus. Involved in rRNA-processing at A0, A1 and A2 sites and negatively regulates telomerase. The chain is Protein pxr1 (pxr1) from Aspergillus clavatus (strain ATCC 1007 / CBS 513.65 / DSM 816 / NCTC 3887 / NRRL 1 / QM 1276 / 107).